Here is a 707-residue protein sequence, read N- to C-terminus: Caprin-1 (707 aa).

2 stretches are compositionally biased toward low complexity: residues 1–15 and 22–43; these read MPSATSHSGSGSKSS and GSSGSEAAAGAAAPASQHPATG. The interval 1–48 is disordered; the sequence is MPSATSHSGSGSKSSGPPPPSGSSGSEAAAGAAAPASQHPATGTGAVQ. An N-acetylproline modification is found at Pro-2. Residue Ser-10 is modified to Phosphoserine. Positions 58–92 form a coiled coil; that stretch reads VIDKKLRNLEKKKGKLDDYQERMNKGERLNQDQLD. Residue Ser-113 is modified to Phosphoserine. Residues 123–151 are a coiled coil; sequence KTIKKTARREQLMREEAEQKRLKTVLELQ. Position 163 is an omega-N-methylarginine (Arg-163). The tract at residues 325–347 is disordered; sequence LQQQPQAASPSVPEPHSLTPVAQ. Residues 326–335 show a composition bias toward low complexity; the sequence is QQQPQAASPS. A phosphoserine mark is found at Ser-333 and Ser-341. The segment at 358–379 is G3BP1-binding; sequence QDLMAQMQGPYNFIQDSMLDFE. Disordered regions lie at residues 412-443, 523-558, and 570-620; these read ESRLAQSNQVPVQPEATQVPLVSSTSEGYTAS, PVPPVNEPETLKQQSQYQASYNQSFSSQPHQVEQTE, and TYHG…RGLM. Over residues 431 to 443 the composition is skewed to polar residues; that stretch reads PLVSSTSEGYTAS. A compositionally biased stretch (low complexity) spans 535–558; it reads QQSQYQASYNQSFSSQPHQVEQTE. Positions 572–603 are enriched in polar residues; it reads HGSQDQPHQVPGNHQQPPQQSTGFPRSSQPYY. Tyr-623 is subject to Phosphotyrosine. An omega-N-methylarginine mark is found at Arg-624 and Arg-631. Phosphotyrosine is present on residues Tyr-634 and Tyr-637. Position 638 is an omega-N-methylarginine (Arg-638). The segment covering 641 to 655 has biased composition (polar residues); it reads FSNTPNSGYTQSQFN. The tract at residues 641-707 is disordered; the sequence is FSNTPNSGYT…MPQMNTQQVN (67 aa). O-linked (GlcNAc) serine glycans are attached at residues Ser-642 and Ser-647. 4 positions are modified to phosphotyrosine: Tyr-649, Tyr-660, Tyr-663, and Tyr-668. Low complexity-rich tracts occupy residues 674–684 and 695–707; these read RGSGQSGPRGA and NRGMPQMNTQQVN. Position 696 is an asymmetric dimethylarginine; alternate (Arg-696). Arg-696 bears the Omega-N-methylarginine; alternate mark.

This sequence belongs to the caprin family. May form homomultimers. Interacts with G3BP1; interaction is direct and promotes stress granule formation. Interacts with G3BP2; interaction is direct and promotes stress granule formation. Interacts with PQBP1. Interacts with DDX3X. Interacts (when phosphorylated by EPHA4) with FMR1; interaction with FMR1 promotes formation of a membraneless compartment. In terms of processing, tyrosine phosphorylation by EPHA4 promotes interaction with FMR1 and liquid-liquid phase separation (LLPS) for the formation of a membraneless compartment that concentrates mRNAs with associated regulatory factors. O-glycosylated (O-GlcNAcylated), in a cell cycle-dependent manner. O-glycosylation by OGT inhibit ability to undergo liquid-liquid phase separation (LLPS). As to expression, expressed in hippocampal and neocortical pyramidal neurons, but not in Purkinje cells.

Its subcellular location is the cytoplasm. The protein resides in the cytoplasmic ribonucleoprotein granule. The protein localises to the cytosol. It localises to the cell projection. It is found in the dendrite. Its subcellular location is the lamellipodium. With respect to regulation, ability to mediate liquid-liquid phase separation is regulated by ATP: moderate concentrations of ATP enhance phase separation, whereas high concentrations of ATP lead to inhibition of phase separation. Functionally, mRNA-binding protein that acts as a regulator of mRNAs transport, translation and/or stability, and which is involved in neurogenesis, synaptic plasticity in neurons and cell proliferation and migration in multiple cell types. Plays an essential role in cytoplasmic stress granule formation. Acts as an mRNA regulator by mediating formation of some phase-separated membraneless compartment: undergoes liquid-liquid phase separation upon binding to target mRNAs, leading to assemble mRNAs into cytoplasmic ribonucleoprotein granules that concentrate mRNAs with associated regulatory factors. Undergoes liquid-liquid phase separation following phosphorylation and interaction with FMR1, promoting formation of cytoplasmic ribonucleoprotein granules that concentrate mRNAs with factors that inhibit translation and mediate deadenylation of target mRNAs. In these cytoplasmic ribonucleoprotein granules, CAPRIN1 mediates recruitment of CNOT7 deadenylase, leading to mRNA deadenylation and degradation. Binds directly and selectively to MYC and CCND2 mRNAs. In neuronal cells, directly binds to several mRNAs associated with RNA granules, including BDNF, CAMK2A, CREB1, MAP2, NTRK2 mRNAs, as well as to GRIN1 and KPNB1 mRNAs, but not to rRNAs. This is Caprin-1 (Caprin1) from Rattus norvegicus (Rat).